The primary structure comprises 235 residues: Glucosamine-6-phosphate deaminase (235 aa).

Catalysis depends on Asp62, which acts as the Proton acceptor; for enolization step. Asn128 serves as the catalytic For ring-opening step. Catalysis depends on His130, which acts as the Proton acceptor; for ring-opening step. Glu135 functions as the For ring-opening step in the catalytic mechanism.

The protein belongs to the glucosamine/galactosamine-6-phosphate isomerase family. NagB subfamily.

It catalyses the reaction alpha-D-glucosamine 6-phosphate + H2O = beta-D-fructose 6-phosphate + NH4(+). It participates in amino-sugar metabolism; N-acetylneuraminate degradation; D-fructose 6-phosphate from N-acetylneuraminate: step 5/5. Functionally, catalyzes the reversible isomerization-deamination of glucosamine 6-phosphate (GlcN6P) to form fructose 6-phosphate (Fru6P) and ammonium ion. In Lactococcus lactis subsp. lactis (strain IL1403) (Streptococcus lactis), this protein is Glucosamine-6-phosphate deaminase.